Reading from the N-terminus, the 324-residue chain is Ribose-phosphate pyrophosphokinase (324 aa).

Residues 45-47 (NGE) and 104-105 (RQ) contribute to the ATP site. 2 residues coordinate Mg(2+): H138 and D178. The active site involves K201. D-ribose 5-phosphate is bound by residues R203, D229, and 233-237 (DTGGT).

Belongs to the ribose-phosphate pyrophosphokinase family. Class I subfamily. In terms of assembly, homohexamer. Requires Mg(2+) as cofactor.

The protein localises to the cytoplasm. The enzyme catalyses D-ribose 5-phosphate + ATP = 5-phospho-alpha-D-ribose 1-diphosphate + AMP + H(+). The protein operates within metabolic intermediate biosynthesis; 5-phospho-alpha-D-ribose 1-diphosphate biosynthesis; 5-phospho-alpha-D-ribose 1-diphosphate from D-ribose 5-phosphate (route I): step 1/1. Involved in the biosynthesis of the central metabolite phospho-alpha-D-ribosyl-1-pyrophosphate (PRPP) via the transfer of pyrophosphoryl group from ATP to 1-hydroxyl of ribose-5-phosphate (Rib-5-P). The chain is Ribose-phosphate pyrophosphokinase from Streptomyces coelicolor (strain ATCC BAA-471 / A3(2) / M145).